The sequence spans 433 residues: Enolase (433 aa).

Glutamine 167 is a binding site for (2R)-2-phosphoglycerate. Glutamate 209 acts as the Proton donor in catalysis. Aspartate 246, glutamate 291, and aspartate 318 together coordinate Mg(2+). (2R)-2-phosphoglycerate-binding residues include lysine 343, arginine 372, serine 373, and lysine 394. Lysine 343 acts as the Proton acceptor in catalysis.

Belongs to the enolase family. Component of the RNA degradosome, a multiprotein complex involved in RNA processing and mRNA degradation. Mg(2+) is required as a cofactor.

It localises to the cytoplasm. The protein localises to the secreted. Its subcellular location is the cell surface. The catalysed reaction is (2R)-2-phosphoglycerate = phosphoenolpyruvate + H2O. It functions in the pathway carbohydrate degradation; glycolysis; pyruvate from D-glyceraldehyde 3-phosphate: step 4/5. Functionally, catalyzes the reversible conversion of 2-phosphoglycerate (2-PG) into phosphoenolpyruvate (PEP). It is essential for the degradation of carbohydrates via glycolysis. This Aeromonas hydrophila subsp. hydrophila (strain ATCC 7966 / DSM 30187 / BCRC 13018 / CCUG 14551 / JCM 1027 / KCTC 2358 / NCIMB 9240 / NCTC 8049) protein is Enolase.